The sequence spans 453 residues: UDP-N-acetylmuramate--L-alanine ligase (453 aa).

112-118 contacts ATP; sequence GTHGKTT.

The protein belongs to the MurCDEF family.

Its subcellular location is the cytoplasm. It catalyses the reaction UDP-N-acetyl-alpha-D-muramate + L-alanine + ATP = UDP-N-acetyl-alpha-D-muramoyl-L-alanine + ADP + phosphate + H(+). The protein operates within cell wall biogenesis; peptidoglycan biosynthesis. Cell wall formation. This chain is UDP-N-acetylmuramate--L-alanine ligase, found in Bdellovibrio bacteriovorus (strain ATCC 15356 / DSM 50701 / NCIMB 9529 / HD100).